Consider the following 248-residue polypeptide: Acyl-coenzyme A thioesterase THEM5 (248 aa).

Residue Asp-167 is the Proton donor/acceptor of the active site.

This sequence belongs to the THEM4/THEM5 thioesterase family. Homodimer.

It is found in the mitochondrion matrix. The catalysed reaction is hexadecanoyl-CoA + H2O = hexadecanoate + CoA + H(+). The enzyme catalyses (9Z,12Z)-octadecadienoyl-CoA + H2O = (9Z,12Z)-octadecadienoate + CoA + H(+). It catalyses the reaction tetradecanoyl-CoA + H2O = tetradecanoate + CoA + H(+). It carries out the reaction (9Z)-octadecenoyl-CoA + H2O = (9Z)-octadecenoate + CoA + H(+). The catalysed reaction is (9Z)-hexadecenoyl-CoA + H2O = (9Z)-hexadecenoate + CoA + H(+). The enzyme catalyses (5Z,8Z,11Z,14Z)-eicosatetraenoyl-CoA + H2O = (5Z,8Z,11Z,14Z)-eicosatetraenoate + CoA + H(+). It catalyses the reaction octadecanoyl-CoA + H2O = octadecanoate + CoA + H(+). Its function is as follows. Has acyl-CoA thioesterase activity towards long-chain (C16 and C18) fatty acyl-CoA substrates, with a preference for linoleoyl-CoA and other unsaturated long-chain fatty acid-CoA esters. Plays an important role in mitochondrial fatty acid metabolism, and in remodeling of the mitochondrial lipid cardiolipin. Required for normal mitochondrial function. This Mus musculus (Mouse) protein is Acyl-coenzyme A thioesterase THEM5 (Them5).